The sequence spans 324 residues: Corticotropin-releasing factor-binding protein (324 aa).

Residues 1–23 (MAPTLKLQCHFILVCLLALRGES) form the signal peptide. 5 disulfides stabilise this stretch: Cys62/Cys83, Cys106/Cys143, Cys185/Cys207, Cys239/Cys266, and Cys279/Cys320. N-linked (GlcNAc...) asparagine glycosylation is present at Asn206.

It belongs to the CRF-binding protein family.

It is found in the secreted. In terms of biological role, binds CRF and inactivates it. May prevent inappropriate pituitary-adrenal stimulation in pregnancy. The sequence is that of Corticotropin-releasing factor-binding protein (CRHBP) from Ovis aries (Sheep).